A 487-amino-acid chain; its full sequence is Rhoptry apical surface protein 1 (487 aa).

The tract at residues 337–487 (EVAMSGRGGH…EEEQPLLFTQ (151 aa)) is disordered. 2 stretches are compositionally biased toward basic and acidic residues: residues 385–399 (DGIRGRSPRGSDRRA) and 454–475 (EKNEEASEADERPRERTEGVEY).

Interacts with RASP2.

Its subcellular location is the cytoplasmic vesicle. The protein localises to the secretory vesicle. The protein resides in the rhoptry membrane. This is Rhoptry apical surface protein 1 from Toxoplasma gondii (strain ATCC 50853 / GT1).